A 300-amino-acid chain; its full sequence is Lysenin-related protein 1 (300 aa).

The interval 12–35 is N-terminal cap domain; the sequence is EEIEVDVVSVWKEGYAYENRGNSS. The interval 36–109 is beta-hairpin domain; it reads VQQKITMTKG…SQVIEHTVTI (74 aa). The interval 110-158 is N-terminal cap domain; the sequence is PPNKKFTRWKLNADVGGTGIEYMYLIDEVTAIGADLTIPEVNKSRAKIL. The tract at residues 159 to 299 is C-terminal receptor-binding domain; the sequence is VGRQIHLGET…EDKWILEVVN (141 aa). Positions 187, 229, 235, and 284 each coordinate an N-(acyl)-sphingosylphosphocholine. Cys274 and Cys285 form a disulfide bridge.

Belongs to the lysenin family. As to quaternary structure, binds to sphingomyelin as a monomer by using its C-terminal domain. Forms a nonamer when sphingomyelin/LRP-1 ratio is lower than ca 500. Oligomerization, but not binding, is influenced by the fluidity of sphingomyelin. Expressed by coelomocytes.

The protein localises to the secreted. It localises to the target cell membrane. Functionally, pore-forming toxin that specifically binds sphingomyelin in the plasma membrane of various cells. Has hemolytic activity. Binding and hemolytic activities of this toxin are 10 times less than those of lysenin and lysenin-related protein 2. The chain is Lysenin-related protein 1 from Eisenia fetida (Red wiggler worm).